Here is a 234-residue protein sequence, read N- to C-terminus: Large ribosomal subunit protein uL1 (234 aa).

Belongs to the universal ribosomal protein uL1 family. As to quaternary structure, part of the 50S ribosomal subunit.

Functionally, binds directly to 23S rRNA. The L1 stalk is quite mobile in the ribosome, and is involved in E site tRNA release. In terms of biological role, protein L1 is also a translational repressor protein, it controls the translation of the L11 operon by binding to its mRNA. This chain is Large ribosomal subunit protein uL1, found in Syntrophobacter fumaroxidans (strain DSM 10017 / MPOB).